The chain runs to 460 residues: MANILGAGVYSDIFFVAFKLPNLFRRIFAEGSFSQSFLPSFIRSSIKGGFASLVGLIFCGVLFMWCLLVALNPLWLTKLLAYGFDEETLKLCTPIVAINFWYLLLVFITTFLGALLQYKHSFFASAYSASLLNLCMILALLISKEKTHLEALYYLSYGVLLGGVAQILLHFYPLVKLGLWDLLFKGLLGFKTKNTNKKEYRLNRAKKDLKAFFKQFFPSVLGNSSAQIASFLDTTIASFLASGSVSYLYYANRVFQLPLALFAIAISTALFPSIAIALKNNQQDLILQRLQKAWFFLVGVLLLCSIGGIMLSKEITELLFERGQFSPKDTLITSQVFSLYLLGLLPFGLTKLFSLWLYAKLEQKKAAKISLISLFLGLAASLSLMPLLGVLGLALANSLSGLFLFVLTIKAFGFQSFLGIIKNLKSWLVILFLACVEILLLLAFKSWVTHLYLFYYFQGF.

The next 11 membrane-spanning stretches (helical) occupy residues I4–F24, F50–A70, I95–L115, F122–I142, L155–V175, I228–L248, L257–A277, K292–S312, V336–W356, A366–P386, and L428–V448.

It belongs to the MurJ/MviN family.

Its subcellular location is the cell inner membrane. Its pathway is cell wall biogenesis; peptidoglycan biosynthesis. In terms of biological role, involved in peptidoglycan biosynthesis. Transports lipid-linked peptidoglycan precursors from the inner to the outer leaflet of the cytoplasmic membrane. This is Probable lipid II flippase MurJ from Helicobacter pylori (strain J99 / ATCC 700824) (Campylobacter pylori J99).